Reading from the N-terminus, the 339-residue chain is Cathepsin B (339 aa).

Residues 1 to 17 form the signal peptide; that stretch reads MWQLWASLCCLLVLANA. The propeptide at 18-79 is activation peptide; the sequence is RSRPSFHPLS…QRVMFTEDLK (62 aa). Intrachain disulfides connect C93/C122, C105/C150, C141/C207, C142/C146, C179/C211, and C187/C198. Residue C108 is part of the active site. The N-linked (GlcNAc...) asparagine glycan is linked to N192. Residue K220 is modified to N6-acetyllysine. Catalysis depends on residues H278 and N298. A propeptide spanning residues 334-339 is cleaved from the precursor; it reads QYWEKI.

This sequence belongs to the peptidase C1 family. In terms of assembly, dimer of a heavy chain and a light chain cross-linked by a disulfide bond. Interacts with SRPX2. Directly interacts with SHKBP1. Expressed in the stratum spinosum of the epidermis. Weak expression is detected in the stratum granulosum.

The protein resides in the lysosome. The protein localises to the melanosome. It localises to the secreted. It is found in the extracellular space. Its subcellular location is the apical cell membrane. It carries out the reaction Hydrolysis of proteins with broad specificity for peptide bonds. Preferentially cleaves -Arg-Arg-|-Xaa bonds in small molecule substrates (thus differing from cathepsin L). In addition to being an endopeptidase, shows peptidyl-dipeptidase activity, liberating C-terminal dipeptides.. With respect to regulation, inhibited by leupeptin. Functionally, thiol protease which is believed to participate in intracellular degradation and turnover of proteins. Cleaves matrix extracellular phosphoglycoprotein MEPE. Involved in the solubilization of cross-linked TG/thyroglobulin in the thyroid follicle lumen. Has also been implicated in tumor invasion and metastasis. This chain is Cathepsin B (CTSB), found in Homo sapiens (Human).